Consider the following 267-residue polypeptide: Probable tetrahydroxynaphthalene reductase MYCGRDRAFT_87994 (267 aa).

NADP(+)-binding residues include Ile-26, Asp-72, Asn-99, and Arg-132. Catalysis depends on Ser-149, which acts as the Proton donor. Tyr-163, Lys-167, Ile-196, and Thr-198 together coordinate NADP(+). Tyr-163 acts as the Proton acceptor in catalysis. Catalysis depends on Lys-167, which acts as the Lowers pKa of active site Tyr.

The protein belongs to the short-chain dehydrogenases/reductases (SDR) family. In terms of assembly, homotetramer.

The catalysed reaction is scytalone + NADP(+) = naphthalene-1,3,6,8-tetrol + NADPH + H(+). The protein operates within pigment biosynthesis; melanin biosynthesis. Functionally, probable tetrahydroxynaphthalene reductase; part of the gene cluster 29 that mediates the biosynthesis dihydroxynaphthalene (DHN)-melanin, a bluish-green pigment and a structural component of the conidial wall. Catalyzes the NADPH-dependent reduction of 1,3,6,8-tetrahydroxynaphthalene (T4HN) into (+)-scytalone. This Zymoseptoria tritici (strain CBS 115943 / IPO323) (Speckled leaf blotch fungus) protein is Probable tetrahydroxynaphthalene reductase MYCGRDRAFT_87994.